The primary structure comprises 355 residues: Protein pelota homolog (355 aa).

This sequence belongs to the eukaryotic release factor 1 family. Pelota subfamily. In terms of assembly, monomer. The cofactor is a divalent metal cation.

It is found in the cytoplasm. May function in recognizing stalled ribosomes, interact with stem-loop structures in stalled mRNA molecules, and effect endonucleolytic cleavage of the mRNA. May play a role in the release non-functional ribosomes and degradation of damaged mRNAs. Has endoribonuclease activity. The protein is Protein pelota homolog of Haloarcula marismortui (strain ATCC 43049 / DSM 3752 / JCM 8966 / VKM B-1809) (Halobacterium marismortui).